Here is a 315-residue protein sequence, read N- to C-terminus: tRNA-dihydrouridine(16) synthase (315 aa).

Residues 7-9 and Q68 contribute to the FMN site; that span reads PME. Catalysis depends on C98, which acts as the Proton donor. Residues K139, 199-201, and 223-224 each bind FMN; these read NGE and GR.

It belongs to the Dus family. DusC subfamily. FMN is required as a cofactor.

It carries out the reaction 5,6-dihydrouridine(16) in tRNA + NADP(+) = uridine(16) in tRNA + NADPH + H(+). The enzyme catalyses 5,6-dihydrouridine(16) in tRNA + NAD(+) = uridine(16) in tRNA + NADH + H(+). Catalyzes the synthesis of 5,6-dihydrouridine (D), a modified base found in the D-loop of most tRNAs, via the reduction of the C5-C6 double bond in target uridines. Specifically modifies U16 in tRNAs. The sequence is that of tRNA-dihydrouridine(16) synthase from Aquipseudomonas alcaligenes (Pseudomonas alcaligenes).